A 523-amino-acid chain; its full sequence is ATP-dependent RNA helicase DBP3 (523 aa).

Residues 1–21 (MTKEEIADKKRKVVDEEVIEK) show a composition bias toward basic and acidic residues. The tract at residues 1 to 71 (MTKEEIADKK…SEKKPEPTSA (71 aa)) is disordered. The span at 22–48 (KKSKKHKKDKKDKKEKKDKKHKKHKKE) shows a compositional bias: basic residues. Residues 49–67 (KKGEKEVEVPEKESEKKPE) are compositionally biased toward basic and acidic residues. A Q motif motif is present at residues 114-140 (LSFDYLSLDSSIQAEISKFPKPTPIQA). Residues 143 to 315 (WPYLLSGKDV…STFMNNPIKV (173 aa)) enclose the Helicase ATP-binding domain. 156–163 (AETGSGKT) is an ATP binding site. The short motif at 262 to 265 (DEAD) is the DEAD box element. The 150-residue stretch at 344 to 493 (KLLELLKKYH…PVPEDLIKFG (150 aa)) folds into the Helicase C-terminal domain.

The protein belongs to the DEAD box helicase family. DDX5/DBP2 subfamily.

It localises to the nucleus. The protein resides in the nucleolus. It catalyses the reaction ATP + H2O = ADP + phosphate + H(+). ATP-dependent RNA helicase required for 60S ribosomal subunit synthesis. Involved in efficient pre-rRNA processing, predominantly at site A3, which is necessary for the normal formation of 25S and 5.8S rRNAs. This is ATP-dependent RNA helicase DBP3 (DBP3) from Saccharomyces cerevisiae (strain ATCC 204508 / S288c) (Baker's yeast).